The following is a 312-amino-acid chain: Ribosomal protein L11 methyltransferase (312 aa).

S-adenosyl-L-methionine is bound by residues Thr160, Gly181, Asp203, and Asn246.

The protein belongs to the methyltransferase superfamily. PrmA family.

Its subcellular location is the cytoplasm. It carries out the reaction L-lysyl-[protein] + 3 S-adenosyl-L-methionine = N(6),N(6),N(6)-trimethyl-L-lysyl-[protein] + 3 S-adenosyl-L-homocysteine + 3 H(+). In terms of biological role, methylates ribosomal protein L11. The polypeptide is Ribosomal protein L11 methyltransferase (Staphylococcus aureus (strain COL)).